A 576-amino-acid chain; its full sequence is MNIQALLSDKVSQALIAAGAPADCEAQVRQSAKAQFGDYQANGVMAVAKKLGMQPRQLAERVVELLDLTGIASKIEIAGPGFINIFLDRQWVAEKVEYALTAPKLGVTPVEPQTIVVDYSAPNVAKQMHVGHLRSTIIGDAAVRTLAFLGHNVIRANHVGDWGTQFGMLIAYLEKMQNENASDMGLSDLELFYQQAKKTYDEDEEFALRARAYVVKLQSGDEYCRQMWRKLVDITMAQNQVAYDRLNVTLTKDDVMGESLYNAMLPEIVADLKAKGLAVESEGATVVYLDEYKNKDGEPMGVIIQKKDGGYLYTTTDIACAKYRYETLGADRILYYIDSRQHQHLMQAWTIVRKAGYVPESVPLEHHMFGMMLGKDGKPFKTRSGGTVKLSDLLDEAVERAGKLIAEKNPDMPADELKQVINAVGIGAVKYADLSKSRTTDYIFDWDNMLALDGNTAPYMQYAYTRVVSVFRRAGVDESSLTLPLVITEDREAALATRLLQFEEIITTVAREGTPHVMCSYLYDLAGLFSSFYEHCQILNAESEEIRQSRLKLAMLTAKTLKQGLDTLGIQTVERM.

The 'HIGH' region signature appears at 122–132 (PNVAKQMHVGH).

It belongs to the class-I aminoacyl-tRNA synthetase family. Monomer.

Its subcellular location is the cytoplasm. The catalysed reaction is tRNA(Arg) + L-arginine + ATP = L-arginyl-tRNA(Arg) + AMP + diphosphate. This chain is Arginine--tRNA ligase, found in Yersinia pseudotuberculosis serotype O:3 (strain YPIII).